A 297-amino-acid chain; its full sequence is Transmembrane protein 178A (297 aa).

The first 25 residues, Met-1–Ala-25, serve as a signal peptide directing secretion. The Extracellular segment spans residues Ile-26–Gly-179. The span at Glu-41–Asn-57 shows a compositional bias: basic and acidic residues. The disordered stretch occupies residues Glu-41–Arg-84. Low complexity predominate over residues Arg-68–Pro-79. Asn-158 is a glycosylation site (N-linked (GlcNAc...) asparagine). A helical membrane pass occupies residues Phe-180–Phe-200. At Trp-201–His-208 the chain is on the cytoplasmic side. A helical transmembrane segment spans residues Val-209–Ala-229. Over Ala-230–Ser-257 the chain is Extracellular. The chain crosses the membrane as a helical span at residues Ile-258–Tyr-278. Residues Pro-279 to Val-297 lie on the Cytoplasmic side of the membrane.

Belongs to the TMEM178 family. Interacts with STIM1.

Its subcellular location is the endoplasmic reticulum membrane. In terms of biological role, acts as a negative regulator of osteoclast differentiation in basal and inflammatory conditions by regulating TNFSF11-induced Ca (2+) fluxes, thereby controlling the induction of NFATC1. In Homo sapiens (Human), this protein is Transmembrane protein 178A (TMEM178A).